The chain runs to 399 residues: S-adenosylmethionine synthase (399 aa).

His17 serves as a coordination point for ATP. Residue Asp19 coordinates Mg(2+). Glu45 lines the K(+) pocket. Positions 58 and 101 each coordinate L-methionine. Positions 101–111 (QSADIAMGVDQ) are flexible loop. Residues 177-179 (DGK), 244-245 (RF), Asp253, 259-260 (RK), Ala276, and Lys280 each bind ATP. Asp253 is a binding site for L-methionine. An L-methionine-binding site is contributed by Lys284.

Belongs to the AdoMet synthase family. In terms of assembly, homotetramer; dimer of dimers. Mg(2+) serves as cofactor. K(+) is required as a cofactor.

The protein localises to the cytoplasm. The enzyme catalyses L-methionine + ATP + H2O = S-adenosyl-L-methionine + phosphate + diphosphate. Its pathway is amino-acid biosynthesis; S-adenosyl-L-methionine biosynthesis; S-adenosyl-L-methionine from L-methionine: step 1/1. Catalyzes the formation of S-adenosylmethionine (AdoMet) from methionine and ATP. The overall synthetic reaction is composed of two sequential steps, AdoMet formation and the subsequent tripolyphosphate hydrolysis which occurs prior to release of AdoMet from the enzyme. This is S-adenosylmethionine synthase from Bacillus anthracis (strain A0248).